The primary structure comprises 273 residues: Pre-mRNA-splicing factor CWC23 (273 aa).

The J domain maps to 15 to 87; the sequence is DLYALLEVSI…SLRATYNRWL (73 aa).

It belongs to the DnaJ family. As to quaternary structure, associated with the spliceosome.

Its subcellular location is the cytoplasm. The protein localises to the nucleus. In terms of biological role, involved in pre-mRNA splicing. May be involved in endoplasmic reticulum-associated protein degradation (ERAD) and required for growth at low and high temperatures. The protein is Pre-mRNA-splicing factor CWC23 (CWC23) of Eremothecium gossypii (strain ATCC 10895 / CBS 109.51 / FGSC 9923 / NRRL Y-1056) (Yeast).